Here is an 816-residue protein sequence, read N- to C-terminus: MDNPHYYSPPITRNVIGKRVPRTEDARLLTGRGKYLNDINVDGQLHACFVRSPAAHAQITGIDTSAASEMPGVHLVWTSADIEQYCAGIEAQYTAEGCEAMTMPLLAKDVVRYVGEPVVLVVAESRAAAEDACDLVGLELEHLEVVLDPRKSIQGGPVANGERPDNVGIRGRASFGDVDEAFSNAEHVVSALYHPGRVAAAPMETRGCLADYEWTEDRLKLWVSTQMPHYVKMCLSLFLGFDESRSEVISPDTGGGFGQKAHVFPEEMLMPLASKHLKTPVKWVEDRRENLLAGSHAHEQFVTIQYAANAEGRITGVRTHALVDGGAYHMPPQTMAVECWATAAVTPTGVYDIPAAEYVYEGAVTNKCPMGAFRGVGYTAGTLARESLMDDLARKMKVSPFEIRRRNVVREFPWTNPQGVVYEEGSFLEVIDALEEMVDYPAFLRRQDEARKAGKYLGLGISVFVESSGESTGMMQAHGATDVFHDTATVKMDSTGSVTITSGLNSQGQGHQTTLAQVAADVLGIPFESISVDAGTSTKGAYGSGTIGSRAAVIAGGCVNRAAYAIRQKLVAVAANMLESSEEDIVLEDGFASVIGAAESRVSIADVAMAVYWDSSKWPAGFEPGLEFTKAWDTSRPMFSNGGHALIVELDPVTGFVKVEKVYSVEDCGVIINPTIVEGQIRGGVVQGIGMGLFEQLAYDNAGNLSTTSFLDYQTPTMDVSPPFEIRHIETPSVMTASGVKGMGESGLISAPAAVLNAVNDALSPFGSVLYELPATPEKVVRATKGIIDLQGPQDWSELWERAGVPALDRGPMDRE.

Residue glutamate 745 coordinates Mo-molybdopterin cytosine dinucleotide.

It belongs to the xanthine dehydrogenase family. Heterotrimer composed of a large subunit (NdhL), a medium subunit (NdhM) and a small subunit (NdhS). Mo-molybdopterin cytosine dinucleotide is required as a cofactor.

Its subcellular location is the cytoplasm. The catalysed reaction is (R)-nicotine + A + H2O = (R)-6-hydroxynicotine + AH2. It catalyses the reaction (S)-nicotine + A + H2O = (S)-6-hydroxynicotine + AH2. The protein operates within alkaloid degradation; nicotine degradation; 6-hydroxypseudooxynicotine from nicotine (R-isomer route): step 1/2. It participates in alkaloid degradation; nicotine degradation; 6-hydroxypseudooxynicotine from nicotine (S-isomer route): step 1/2. Nicotine dehydrogenase activity is inhibited by tungsten. In terms of biological role, component of the nicotine 6-hydroxylase, which is involved in the degradation of nicotine. Catalyzes the hydroxylation of the pyridine ring at C6 to form 6-hydroxynicotine. Can use both L-nicotine and D-nicotine. The protein is Nicotine 6-hydroxylase large subunit of Paenarthrobacter nicotinovorans (Arthrobacter nicotinovorans).